The sequence spans 116 residues: CDKN2AIP N-terminal-like protein (116 aa).

Methionine 1 carries the N-acetylmethionine modification. The region spanning 24–116 (AEQFRSYSES…RSELMKKHQS (93 aa)) is the XRN2-binding (XTBD) domain.

The protein belongs to the CARF family. As to quaternary structure, interacts with XRN2; the interaction is direct.

The polypeptide is CDKN2AIP N-terminal-like protein (Cdkn2aipnl) (Rattus norvegicus (Rat)).